A 297-amino-acid chain; its full sequence is Homoserine kinase (297 aa).

Pro82 to Ala92 contacts ATP.

It belongs to the GHMP kinase family. Homoserine kinase subfamily.

It is found in the cytoplasm. The catalysed reaction is L-homoserine + ATP = O-phospho-L-homoserine + ADP + H(+). The protein operates within amino-acid biosynthesis; L-threonine biosynthesis; L-threonine from L-aspartate: step 4/5. Catalyzes the ATP-dependent phosphorylation of L-homoserine to L-homoserine phosphate. The sequence is that of Homoserine kinase from Clostridium botulinum (strain Langeland / NCTC 10281 / Type F).